We begin with the raw amino-acid sequence, 316 residues long: Transaldolase (316 aa).

The active-site Schiff-base intermediate with substrate is the Lys-132.

It belongs to the transaldolase family. Type 1 subfamily.

Its subcellular location is the cytoplasm. The enzyme catalyses D-sedoheptulose 7-phosphate + D-glyceraldehyde 3-phosphate = D-erythrose 4-phosphate + beta-D-fructose 6-phosphate. It functions in the pathway carbohydrate degradation; pentose phosphate pathway; D-glyceraldehyde 3-phosphate and beta-D-fructose 6-phosphate from D-ribose 5-phosphate and D-xylulose 5-phosphate (non-oxidative stage): step 2/3. Functionally, transaldolase is important for the balance of metabolites in the pentose-phosphate pathway. The chain is Transaldolase from Methylomonas aminofaciens.